Reading from the N-terminus, the 227-residue chain is uncharacterized protein (227 aa).

The chain crosses the membrane as a helical span at residues 7–26 (IITLTILIFISGLLTAFLLL).

The protein localises to the membrane. This is an uncharacterized protein from Haemophilus influenzae (strain ATCC 51907 / DSM 11121 / KW20 / Rd).